A 352-amino-acid polypeptide reads, in one-letter code: Alanine racemase (352 aa).

Lys34 acts as the Proton acceptor; specific for D-alanine in catalysis. At Lys34 the chain carries N6-(pyridoxal phosphate)lysine. Substrate is bound at residue Arg126. The active-site Proton acceptor; specific for L-alanine is the Tyr248. Met296 lines the substrate pocket.

The protein belongs to the alanine racemase family. Pyridoxal 5'-phosphate serves as cofactor.

It catalyses the reaction L-alanine = D-alanine. It functions in the pathway amino-acid biosynthesis; D-alanine biosynthesis; D-alanine from L-alanine: step 1/1. In terms of biological role, catalyzes the interconversion of L-alanine and D-alanine. May also act on other amino acids. This chain is Alanine racemase (alr), found in Deinococcus deserti (strain DSM 17065 / CIP 109153 / LMG 22923 / VCD115).